Consider the following 76-residue polypeptide: DNA-directed RNA polymerase subunit epsilon (76 aa).

It belongs to the RNA polymerase subunit epsilon family. In terms of assembly, RNAP is composed of a core of 2 alpha, a beta and a beta' subunit. The core is associated with a delta subunit, and at least one of epsilon or omega. When a sigma factor is associated with the core the holoenzyme is formed, which can initiate transcription.

The catalysed reaction is RNA(n) + a ribonucleoside 5'-triphosphate = RNA(n+1) + diphosphate. Functionally, a non-essential component of RNA polymerase (RNAP). The chain is DNA-directed RNA polymerase subunit epsilon from Streptococcus mutans serotype c (strain ATCC 700610 / UA159).